A 352-amino-acid chain; its full sequence is Histidine biosynthesis bifunctional protein HisB (352 aa).

The interval 1–164 (MSQKILFIDR…EIENEILSSF (164 aa)) is histidinol-phosphatase. The active-site Nucleophile is Asp9. The Mg(2+) site is built by Asp9 and Asp11. Catalysis depends on Asp11, which acts as the Proton donor. 4 residues coordinate Zn(2+): Cys93, His95, Cys101, and Cys103. Residue Asp130 coordinates Mg(2+). The segment at 165–352 (RSASYQRTTK…ENLASSKGVI (188 aa)) is imidazoleglycerol-phosphate dehydratase.

In the N-terminal section; belongs to the histidinol-phosphatase family. It in the C-terminal section; belongs to the imidazoleglycerol-phosphate dehydratase family. The cofactor is Mg(2+). It depends on Zn(2+) as a cofactor.

It is found in the cytoplasm. It carries out the reaction D-erythro-1-(imidazol-4-yl)glycerol 3-phosphate = 3-(imidazol-4-yl)-2-oxopropyl phosphate + H2O. It catalyses the reaction L-histidinol phosphate + H2O = L-histidinol + phosphate. Its pathway is amino-acid biosynthesis; L-histidine biosynthesis; L-histidine from 5-phospho-alpha-D-ribose 1-diphosphate: step 6/9. It participates in amino-acid biosynthesis; L-histidine biosynthesis; L-histidine from 5-phospho-alpha-D-ribose 1-diphosphate: step 8/9. In Campylobacter jejuni subsp. jejuni serotype O:6 (strain 81116 / NCTC 11828), this protein is Histidine biosynthesis bifunctional protein HisB.